Reading from the N-terminus, the 102-residue chain is Putative pterin-4-alpha-carbinolamine dehydratase (102 aa).

This sequence belongs to the pterin-4-alpha-carbinolamine dehydratase family.

It carries out the reaction (4aS,6R)-4a-hydroxy-L-erythro-5,6,7,8-tetrahydrobiopterin = (6R)-L-erythro-6,7-dihydrobiopterin + H2O. The chain is Putative pterin-4-alpha-carbinolamine dehydratase from Burkholderia cenocepacia (strain ATCC BAA-245 / DSM 16553 / LMG 16656 / NCTC 13227 / J2315 / CF5610) (Burkholderia cepacia (strain J2315)).